We begin with the raw amino-acid sequence, 304 residues long: Homoserine kinase (304 aa).

91–101 serves as a coordination point for ATP; that stretch reads PLGKGMGSSAA.

It belongs to the GHMP kinase family. Homoserine kinase subfamily.

It localises to the cytoplasm. The enzyme catalyses L-homoserine + ATP = O-phospho-L-homoserine + ADP + H(+). Its pathway is amino-acid biosynthesis; L-threonine biosynthesis; L-threonine from L-aspartate: step 4/5. Its function is as follows. Catalyzes the ATP-dependent phosphorylation of L-homoserine to L-homoserine phosphate. The polypeptide is Homoserine kinase (Solibacter usitatus (strain Ellin6076)).